The following is an 88-amino-acid chain: Conotoxin Gm9.1 (88 aa).

The N-terminal stretch at Met1–Ser27 is a signal peptide. A propeptide spanning residues Gly28–Ser58 is cleaved from the precursor. 3 disulfides stabilise this stretch: Cys62–Cys76, Cys66–Cys78, and Cys72–Cys83. Residue Asn87 is modified to Asparagine amide.

It belongs to the conotoxin P superfamily. Expressed by the venom duct.

The protein resides in the secreted. In terms of biological role, neurotoxin. In vivo, elicits 'spasmodic' symptomatology. In Conus gloriamaris (Glory-of-the-Sea cone), this protein is Conotoxin Gm9.1.